A 60-amino-acid polypeptide reads, in one-letter code: Single-pass membrane and coiled-coil domain-containing protein 4 homolog (60 aa).

The disordered stretch occupies residues 1–21 (MRKLRGGQTKETRKQKQERRE). The segment covering 8 to 21 (QTKETRKQKQERRE) has biased composition (basic and acidic residues). Residues 10 to 33 (KETRKQKQERREENLKIQQQLKTI) adopt a coiled-coil conformation. The helical transmembrane segment at 32–52 (TIVLPICGVFLMCIVVYVFLK) threads the bilayer.

The protein belongs to the SMCO4 family.

The protein localises to the membrane. This is Single-pass membrane and coiled-coil domain-containing protein 4 homolog from Aedes aegypti (Yellowfever mosquito).